The following is a 267-amino-acid chain: GTP cyclohydrolase FolE2 (267 aa).

It belongs to the GTP cyclohydrolase IV family.

The catalysed reaction is GTP + H2O = 7,8-dihydroneopterin 3'-triphosphate + formate + H(+). The protein operates within cofactor biosynthesis; 7,8-dihydroneopterin triphosphate biosynthesis; 7,8-dihydroneopterin triphosphate from GTP: step 1/1. In terms of biological role, converts GTP to 7,8-dihydroneopterin triphosphate. The protein is GTP cyclohydrolase FolE2 of Nitrosococcus oceani (strain ATCC 19707 / BCRC 17464 / JCM 30415 / NCIMB 11848 / C-107).